The sequence spans 141 residues: Glutamyl-tRNA(Gln) amidotransferase subunit C, chloroplastic/mitochondrial (141 aa).

It belongs to the GatC family. Subunit of the heterotrimeric GatCAB amidotransferase (AdT) complex, composed of A, B and C subunits.

Its subcellular location is the mitochondrion. The protein localises to the plastid. It localises to the chloroplast. It catalyses the reaction L-glutamyl-tRNA(Gln) + L-glutamine + ATP + H2O = L-glutaminyl-tRNA(Gln) + L-glutamate + ADP + phosphate + H(+). Allows the formation of correctly charged Gln-tRNA(Gln) through the transamidation of misacylated Glu-tRNA(Gln) in chloroplasts and mitochondria. The reaction takes place in the presence of glutamine and ATP through an activated gamma-phospho-Glu-tRNA(Gln). This is Glutamyl-tRNA(Gln) amidotransferase subunit C, chloroplastic/mitochondrial from Populus trichocarpa (Western balsam poplar).